Here is a 508-residue protein sequence, read N- to C-terminus: Aldehyde dehydrogenase family 7 member A1 (508 aa).

NAD(+) is bound at residue 244 to 249 (GSSKVG). Glu-266 serves as the catalytic Proton acceptor. Cys-300 functions as the Nucleophile in the catalytic mechanism.

It belongs to the aldehyde dehydrogenase family. In terms of assembly, homotetramer.

It catalyses the reaction an aldehyde + NAD(+) + H2O = a carboxylate + NADH + 2 H(+). Functionally, may play a role in fruit development. The protein is Aldehyde dehydrogenase family 7 member A1 of Malus domestica (Apple).